The following is a 294-amino-acid chain: Flavin-dependent thymidylate synthase (294 aa).

Residues 27–250 enclose the ThyX domain; sequence GFIRVIDYMG…PFTYEAFEEY (224 aa). Residues T73, 96-98, and E104 each bind FAD; that span reads RHR. DUMP contacts are provided by residues 93–96, 104–108, and R189; these read QWIR and EYSAR. The ThyX motif signature appears at 96-106; it reads RHRTASVNEYS. FAD is bound by residues 205–207 and H211; that span reads NLH. Residue R216 participates in dUMP binding. R216 serves as the catalytic Involved in ionization of N3 of dUMP, leading to its activation.

Belongs to the thymidylate synthase ThyX family. As to quaternary structure, homotetramer. The cofactor is FAD.

It catalyses the reaction dUMP + (6R)-5,10-methylene-5,6,7,8-tetrahydrofolate + NADPH + H(+) = dTMP + (6S)-5,6,7,8-tetrahydrofolate + NADP(+). It participates in pyrimidine metabolism; dTTP biosynthesis. In terms of biological role, catalyzes the reductive methylation of 2'-deoxyuridine-5'-monophosphate (dUMP) to 2'-deoxythymidine-5'-monophosphate (dTMP) while utilizing 5,10-methylenetetrahydrofolate (mTHF) as the methyl donor, and NADPH and FADH(2) as the reductant. This is Flavin-dependent thymidylate synthase from Rickettsia bellii (strain RML369-C).